Consider the following 858-residue polypeptide: MAEESSMEGSEKEEIDSSGGGFGDMASMDSIESRWVIQDDDDSEIGVDDDNDGFDGTGLESDEDEIPEHRLIRTGPRVDSFDVEALEVPGAPRNDYEDLTVGRKVLLAFQTLGVVFGDVGTSPLYTFSVMFSKSPVQEKEDVIGALSLVLYTLLLVPLIKYVLVVLWANDDGEGGTFALYSLISRHAKISLIPNQLRSDTRISSFRLKVPCPELERSLKLKEKLENSLILKKILLVLVLAGTSMVIADGVVTPAMSVMSAVGGLKVGVDVVEQDQVVMISVAFLVILFSLQKYGTSKMGLVVGPALLIWFCSLAGIGIYNLIKYDSSVYRAFNPVHIYYFFKRNSINAWYALGGCILCATGSEALFADLCYFSVRSVQLTFVCLVLPCLMLGYMGQAAYLMENHADASQAFFSSVPGSAFWPVLFIANIAALIASRTMTTATFSCIKQSTALGCFPRLKIIHTSRKFMGQIYIPVLNWFLLAVCLVVVCSISSIDEIGNAYGMAELGVMMTTTILVTLIMLLIWQINIVIVIAFLVVFLGVELVFFSSVIASVGDGSWIILVFAVIMFGIMYIWNYGSKLRYETEVEQKLSMDLMRELGCNLGTIRAPGIGLLYNELVKGVPAIFGHFLTTLPAIHSMVIFVCIKYVPVPVVPQNERFLFRRVCTKSYHLFRCIARYGYKDARKETHQAFEQLLIESLEKFIRREAQERSLESDGNDDSDSEEDFPGSRVVIGPNGSMYSMGVPLLSEYRDLNKPIMEMNTSSDHTNHHPFDTSSDSSVSEAEQSLERELSFIHKAKESGVVYLLGHGDIRARKDSWFIKKLVINYFYTFLRKNCRRGIANLSVPQSHLMQVGMTYMV.

Composition is skewed to acidic residues over residues 1 to 16 (MAEE…EEID) and 38 to 53 (QDDD…DNDG). The segment at 1-68 (MAEESSMEGS…LESDEDEIPE (68 aa)) is disordered. The Cytoplasmic portion of the chain corresponds to 1 to 104 (MAEESSMEGS…DYEDLTVGRK (104 aa)). Residues 105–125 (VLLAFQTLGVVFGDVGTSPLY) traverse the membrane as a helical segment. Residues 126–147 (TFSVMFSKSPVQEKEDVIGALS) are Extracellular-facing. A helical transmembrane segment spans residues 148–168 (LVLYTLLLVPLIKYVLVVLWA). Residues 169 to 232 (NDDGEGGTFA…KLENSLILKK (64 aa)) are Cytoplasmic-facing. A helical membrane pass occupies residues 233-253 (ILLVLVLAGTSMVIADGVVTP). Over 254-269 (AMSVMSAVGGLKVGVD) the chain is Extracellular. The helical transmembrane segment at 270–290 (VVEQDQVVMISVAFLVILFSL) threads the bilayer. The Cytoplasmic portion of the chain corresponds to 291 to 297 (QKYGTSK). Residues 298-318 (MGLVVGPALLIWFCSLAGIGI) traverse the membrane as a helical segment. Residues 319–345 (YNLIKYDSSVYRAFNPVHIYYFFKRNS) lie on the Extracellular side of the membrane. Residues 346 to 366 (INAWYALGGCILCATGSEALF) form a helical membrane-spanning segment. Over 367–380 (ADLCYFSVRSVQLT) the chain is Cytoplasmic. The chain crosses the membrane as a helical span at residues 381–401 (FVCLVLPCLMLGYMGQAAYLM). Residues 402–413 (ENHADASQAFFS) are Extracellular-facing. The helical transmembrane segment at 414 to 434 (SVPGSAFWPVLFIANIAALIA) threads the bilayer. The Cytoplasmic portion of the chain corresponds to 435–470 (SRTMTTATFSCIKQSTALGCFPRLKIIHTSRKFMGQ). Residues 471–491 (IYIPVLNWFLLAVCLVVVCSI) traverse the membrane as a helical segment. Topologically, residues 492–496 (SSIDE) are extracellular. The helical transmembrane segment at 497 to 517 (IGNAYGMAELGVMMTTTILVT) threads the bilayer. Leu-518 is a topological domain (cytoplasmic). A helical membrane pass occupies residues 519–539 (IMLLIWQINIVIVIAFLVVFL). The Extracellular portion of the chain corresponds to 540–552 (GVELVFFSSVIAS). The helical transmembrane segment at 553–573 (VGDGSWIILVFAVIMFGIMYI) threads the bilayer. The Cytoplasmic segment spans residues 574-858 (WNYGSKLRYE…LMQVGMTYMV (285 aa)). Residues 707–731 (QERSLESDGNDDSDSEEDFPGSRVV) form a disordered region. The segment covering 714–725 (DGNDDSDSEEDF) has biased composition (acidic residues). Ser-719 and Ser-721 each carry phosphoserine.

It belongs to the HAK/KUP transporter (TC 2.A.72.3) family.

The protein resides in the cell membrane. Functionally, probable potassium transporter. The chain is Potassium transporter 7 (POT7) from Arabidopsis thaliana (Mouse-ear cress).